A 75-amino-acid polypeptide reads, in one-letter code: Small ribosomal subunit protein bS18 (75 aa).

It belongs to the bacterial ribosomal protein bS18 family. In terms of assembly, part of the 30S ribosomal subunit. Forms a tight heterodimer with protein bS6.

Its function is as follows. Binds as a heterodimer with protein bS6 to the central domain of the 16S rRNA, where it helps stabilize the platform of the 30S subunit. In Teredinibacter turnerae (strain ATCC 39867 / T7901), this protein is Small ribosomal subunit protein bS18.